The chain runs to 306 residues: D-alanine--D-alanine ligase B (306 aa).

Residues Glu-15 and Ser-150 contribute to the active site. Positions 101 to 303 (KLLWQGAGLP…FSQLVVRILE (203 aa)) constitute an ATP-grasp domain. Residue 134–189 (ISALGLPVIVKPSREGSSVGMSKVVAENALQDALRLAFQHDEEVLIEKWLSGPEFT) participates in ATP binding. Positions 257, 270, and 272 each coordinate Mg(2+). Residue Ser-281 is part of the active site.

This sequence belongs to the D-alanine--D-alanine ligase family. In terms of assembly, monomer. It depends on Mg(2+) as a cofactor. Requires Mn(2+) as cofactor.

Its subcellular location is the cytoplasm. The catalysed reaction is 2 D-alanine + ATP = D-alanyl-D-alanine + ADP + phosphate + H(+). It participates in cell wall biogenesis; peptidoglycan biosynthesis. In terms of biological role, cell wall formation. The protein is D-alanine--D-alanine ligase B (ddlB) of Escherichia coli O157:H7.